Here is a 37-residue protein sequence, read N- to C-terminus: Large ribosomal subunit protein bL36c (37 aa).

Belongs to the bacterial ribosomal protein bL36 family.

The protein localises to the plastid. The protein resides in the chloroplast. This chain is Large ribosomal subunit protein bL36c (rpl36), found in Anthoceros angustus (Hornwort).